Reading from the N-terminus, the 819-residue chain is Cadherin-24 (819 aa).

An N-terminal signal peptide occupies residues 1 to 19 (MWGLVRLLLAWLGGWGCMG). The propeptide occupies 21-44 (LAAPARAWAGSREHPGPALLRTRR). Residues 45 to 641 (SWVWNQFFVI…LSAAGLSTGA (597 aa)) are Extracellular-facing. Cadherin domains are found at residues 46-150 (WVWN…PPIF), 151-259 (PLGP…PPKF), 260-374 (PQSL…PPAF), 375-517 (TQAA…APQL), and 517-630 (LAEP…WPEA). Asparagine 446, asparagine 548, and asparagine 563 each carry an N-linked (GlcNAc...) asparagine glycan. The helical transmembrane segment at 642-662 (LLAIITCVGALLALVVLFVAL) threads the bilayer. The Cytoplasmic segment spans residues 663–819 (RRQKQEALMV…LYGAKEPPAP (157 aa)). The disordered stretch occupies residues 768–800 (YEGRGSSCGSLSSLGSGSEAGGAPGPAEPLDDW). Over residues 771 to 784 (RGSSCGSLSSLGSG) the composition is skewed to low complexity.

As to quaternary structure, associates with alpha-, beta- and delta-catenins.

It localises to the cell membrane. Cadherins are calcium-dependent cell adhesion proteins. They preferentially interact with themselves in a homophilic manner in connecting cells; cadherins may thus contribute to the sorting of heterogeneous cell types. Cadherin-24 mediate strong cell-cell adhesion. This Homo sapiens (Human) protein is Cadherin-24 (CDH24).